We begin with the raw amino-acid sequence, 245 residues long: 2,3-bisphosphoglycerate-dependent phosphoglycerate mutase 1 (245 aa).

Substrate-binding positions include 8–15 (RHGQSLWN), 21–22 (TG), arginine 60, 87–90 (ERHY), lysine 98, 114–115 (RR), and 183–184 (GN). Catalysis depends on histidine 9, which acts as the Tele-phosphohistidine intermediate. The active-site Proton donor/acceptor is glutamate 87.

The protein belongs to the phosphoglycerate mutase family. BPG-dependent PGAM subfamily.

The enzyme catalyses (2R)-2-phosphoglycerate = (2R)-3-phosphoglycerate. The protein operates within carbohydrate degradation; glycolysis; pyruvate from D-glyceraldehyde 3-phosphate: step 3/5. Its function is as follows. Catalyzes the interconversion of 2-phosphoglycerate and 3-phosphoglycerate. The chain is 2,3-bisphosphoglycerate-dependent phosphoglycerate mutase 1 from Bacillus cereus (strain ATCC 10987 / NRS 248).